Consider the following 91-residue polypeptide: UPF0250 protein NGK_1021 (91 aa).

It belongs to the UPF0250 family.

In Neisseria gonorrhoeae (strain NCCP11945), this protein is UPF0250 protein NGK_1021.